The chain runs to 436 residues: Adenylosuccinate synthetase (436 aa).

GTP contacts are provided by residues 13-19 (GDEGKGK) and 41-43 (GHT). Residue Asp-14 is the Proton acceptor of the active site. Asp-14 and Gly-41 together coordinate Mg(2+). Residues 14-17 (DEGK), 39-42 (NAGH), Thr-131, Arg-145, Gln-226, Thr-241, and Arg-309 contribute to the IMP site. The active-site Proton donor is His-42. Substrate is bound at residue 305-311 (TVTGRKR). Residues Arg-311, 337–339 (KLD), and 419–421 (STG) contribute to the GTP site.

Belongs to the adenylosuccinate synthetase family. Homodimer. Mg(2+) is required as a cofactor.

It is found in the cytoplasm. The enzyme catalyses IMP + L-aspartate + GTP = N(6)-(1,2-dicarboxyethyl)-AMP + GDP + phosphate + 2 H(+). It participates in purine metabolism; AMP biosynthesis via de novo pathway; AMP from IMP: step 1/2. Functionally, plays an important role in the de novo pathway of purine nucleotide biosynthesis. Catalyzes the first committed step in the biosynthesis of AMP from IMP. The polypeptide is Adenylosuccinate synthetase (Aromatoleum aromaticum (strain DSM 19018 / LMG 30748 / EbN1) (Azoarcus sp. (strain EbN1))).